We begin with the raw amino-acid sequence, 138 residues long: uncharacterized protein (138 aa).

The tract at residues Arg74–Tyr96 is disordered. The segment covering Thr87–Tyr96 has biased composition (basic and acidic residues).

This is an uncharacterized protein from Orgyia pseudotsugata (Douglas-fir tussock moth).